A 360-amino-acid chain; its full sequence is Mannose-1-phosphate guanylyltransferase catalytic subunit beta (360 aa).

The tract at residues 2-222 is substrate-binding domain; it reads KALILVGGYG…QGFWMDIGQP (221 aa). Position 110 (aspartate 110) interacts with GDP-alpha-D-mannose. Residue aspartate 110 coordinates Mg(2+). Lysine 162 is a catalytic residue. Residue aspartate 218 participates in GDP-alpha-D-mannose binding. A Mg(2+)-binding site is contributed by aspartate 218. Residues 245 to 360 are hexapeptide repeat domain; that stretch reads CSGPGIVGNV…ESVPEPGIIM (116 aa).

Belongs to the transferase hexapeptide repeat family. As to quaternary structure, component of the GMPPA-GMPPB mannose-1-phosphate guanylyltransferase complex composed of 4 GMPPA subunits and 8 GMPPB subunits; the complex is organized into three layers, a central layer made up of 2 GMPPA dimers sandwiched between two layers each made up of 2 GMPPB dimers. GMPPB catalytic activity is reduced when part of the complex and binding of GDP-alpha-D-Mannose by GMPPA induces allosteric feedback inhibition of GMPPB. The cofactor is Mg(2+). As to expression, expressed in the liver (at protein level).

It localises to the cytoplasm. The enzyme catalyses alpha-D-mannose 1-phosphate + GTP + H(+) = GDP-alpha-D-mannose + diphosphate. It functions in the pathway nucleotide-sugar biosynthesis; GDP-alpha-D-mannose biosynthesis; GDP-alpha-D-mannose from alpha-D-mannose 1-phosphate (GTP route): step 1/1. Enzyme activity is reduced by incorporation into the GMPPA-GMPPB mannose-1-phosphate guanylyltransferase complex. Allosterically inhibited, when part of the GMPPA-GMPPB complex, by GDP-alpha-D-mannose binding to GMPPA. Its function is as follows. Catalytic subunit of the GMPPA-GMPPB mannose-1-phosphate guanylyltransferase complex. Catalyzes the formation of GDP-mannose, an essential precursor of glycan moieties of glycoproteins and glycolipids. Can catalyze the reverse reaction in vitro. Together with GMPPA regulates GDP-alpha-D-mannose levels. This is Mannose-1-phosphate guanylyltransferase catalytic subunit beta from Sus scrofa (Pig).